The following is a 415-amino-acid chain: NEDD8-specific protease 2 (415 aa).

Residues 1–42 form a disordered region; it reads MRSNSIFTKEIDSEAVKKSSNLRPPSTGSSNSNGSDTASPKK. Over residues 26-38 the composition is skewed to low complexity; the sequence is STGSSNSNGSDTA. At S35 the chain carries Phosphoserine. Catalysis depends on residues H171, D188, and C229. Residues 320-415 are disordered; that stretch reads AVTSDSAQPH…QHTQQSIEIH (96 aa). Composition is skewed to polar residues over residues 335-368, 379-390, and 405-415; these read MPSSQPQSRSESLPLTHPNSEPNPKLDSQPNSSP, TASTSVLPTSIL, and IQHTQQSIEIH. S367 carries the post-translational modification Phosphoserine.

Belongs to the peptidase C48 family.

It is found in the cytoplasm. It localises to the nucleus. Functionally, protease that catalyzes two essential functions in the NEDD8 pathway: processing of full-length NEDD8 to its mature form and deconjugation of NEDD8 from targeted proteins such as the pcu1, pcu2 and pcu4 cullins and other proteins. Has a role in meiosis. In Schizosaccharomyces pombe (strain 972 / ATCC 24843) (Fission yeast), this protein is NEDD8-specific protease 2 (nep2).